The primary structure comprises 738 residues: Polyribonucleotide nucleotidyltransferase (738 aa).

Aspartate 528 and aspartate 534 together coordinate Mg(2+). Residues 594–653 (PRVVRVKIPVQKIGELIGPKGKVINSIQDETGAEISIEDDGTVYIGSSQADSSEKAVAMV) form the KH domain. The 73-residue stretch at 665 to 737 (GSQFLGTVVK…DRGKLCLVAV (73 aa)) folds into the S1 motif domain.

Belongs to the polyribonucleotide nucleotidyltransferase family. It depends on Mg(2+) as a cofactor.

Its subcellular location is the cytoplasm. It carries out the reaction RNA(n+1) + phosphate = RNA(n) + a ribonucleoside 5'-diphosphate. Involved in mRNA degradation. Catalyzes the phosphorolysis of single-stranded polyribonucleotides processively in the 3'- to 5'-direction. The sequence is that of Polyribonucleotide nucleotidyltransferase from Tropheryma whipplei (strain Twist) (Whipple's bacillus).